The following is a 174-amino-acid chain: RNA pyrophosphohydrolase (174 aa).

One can recognise a Nudix hydrolase domain in the interval 6–149 (GFRANVGIII…KRDVYRKVMK (144 aa)). The short motif at 38–59 (GGVDDGETAEEAMYRELYEEVG) is the Nudix box element.

The protein belongs to the Nudix hydrolase family. RppH subfamily. Requires a divalent metal cation as cofactor.

Its function is as follows. Accelerates the degradation of transcripts by removing pyrophosphate from the 5'-end of triphosphorylated RNA, leading to a more labile monophosphorylated state that can stimulate subsequent ribonuclease cleavage. The sequence is that of RNA pyrophosphohydrolase from Shewanella baltica (strain OS223).